We begin with the raw amino-acid sequence, 261 residues long: GTP cyclohydrolase FolE2 (261 aa).

The protein belongs to the GTP cyclohydrolase IV family.

The enzyme catalyses GTP + H2O = 7,8-dihydroneopterin 3'-triphosphate + formate + H(+). It functions in the pathway cofactor biosynthesis; 7,8-dihydroneopterin triphosphate biosynthesis; 7,8-dihydroneopterin triphosphate from GTP: step 1/1. Its function is as follows. Converts GTP to 7,8-dihydroneopterin triphosphate. In Geobacter metallireducens (strain ATCC 53774 / DSM 7210 / GS-15), this protein is GTP cyclohydrolase FolE2.